The sequence spans 460 residues: Probable amino acid transporter skat-1 (460 aa).

The next 10 membrane-spanning stretches (helical) occupy residues 64–84 (LGGL…NWYG), 132–152 (FVNV…ILFI), 172–192 (MILM…FTEM), 194–214 (IVSF…AVIM), 236–256 (TITM…ILPI), 270–290 (FGVL…LGFF), 316–336 (VNVF…YVVY), 362–382 (GFRV…PKLE), 383–403 (IMIP…FPPF), and 426–446 (IFIN…GVYT).

Belongs to the amino acid/polyamine transporter 2 family. Expressed in the head, tail, body and ventral nerve cord neurons, muscles of the vulva, and intestine.

The protein localises to the membrane. The protein resides in the cytoplasmic granule. Functionally, plays a role in the accumulation of vital dyes and endogenous fluorescent compounds in lysosome related organelles. Has an effect on lysosome related organelle (LRO) function, in a pathway with serotonin. In Caenorhabditis elegans, this protein is Probable amino acid transporter skat-1.